A 494-amino-acid polypeptide reads, in one-letter code: MSHYLLAIDQGTTSSRAIVFSAQGLPVASCQQEFKQYFPKDGWVEHDGEEIWLTTLQVCRDALARKGLRAADIAAIGITNQRETTLVWDAASGDLIHPAIVWQDRRTADYCAELKAAGHEANVSARTGLLIDPYFSATKLRWILDNVPGARQRAERGELRFGTVDCFLLWRLTGGRSHRTDATNASRTLLFNIHSQDWDEELLALFEIPRSLLPEVLDCAAEFGVSEPSLLGAAIPVLGMAGDQQAALIGQACFQPGMVKSTYGTGCFMIQNTGEQPVTSKNRLLTTVGYRLDGKVSYAVEGSIFVAGAAVQWLRDGIKLIDHAHESEALAIQAGDSNGVYLVPAFTGLGAPYWDPKARGAIFGLTRDTGIKEIVTAGLQSVCYQTRDLLEAMRQDGTPPSALRVDGGMVVNNWMMQFLTDILGVTVERPEVTETTALGVAYMAGLKAGFYRDLDDIASHWHLQRRFAAHMAEERRGELYAGWQNAVRRVRSEA.

Position 12 (threonine 12) interacts with ADP. ATP contacts are provided by threonine 12, threonine 13, and serine 14. Threonine 12 contributes to the sn-glycerol 3-phosphate binding site. Residue arginine 16 participates in ADP binding. Residues arginine 82, glutamate 83, tyrosine 134, and aspartate 243 each coordinate sn-glycerol 3-phosphate. Residues arginine 82, glutamate 83, tyrosine 134, aspartate 243, and glutamine 244 each contribute to the glycerol site. The ADP site is built by threonine 265 and glycine 308. The ATP site is built by threonine 265, glycine 308, glutamine 312, and glycine 408. Residues glycine 408 and asparagine 412 each coordinate ADP.

Belongs to the FGGY kinase family.

The enzyme catalyses glycerol + ATP = sn-glycerol 3-phosphate + ADP + H(+). The protein operates within polyol metabolism; glycerol degradation via glycerol kinase pathway; sn-glycerol 3-phosphate from glycerol: step 1/1. With respect to regulation, inhibited by fructose 1,6-bisphosphate (FBP). Its function is as follows. Key enzyme in the regulation of glycerol uptake and metabolism. Catalyzes the phosphorylation of glycerol to yield sn-glycerol 3-phosphate. In Pseudomonas aeruginosa (strain ATCC 15692 / DSM 22644 / CIP 104116 / JCM 14847 / LMG 12228 / 1C / PRS 101 / PAO1), this protein is Glycerol kinase 1.